An 855-amino-acid chain; its full sequence is Cell surface glycoprotein (855 aa).

The signal sequence occupies residues Met-1 to Ala-22. N-linked (GlcNAc...) asparagine glycosylation is found at Asn-78, Asn-83, Asn-108, Asn-167, Asn-174, Asn-187, Asn-203, Asn-227, Asn-230, Asn-313, Asn-363, Asn-441, Asn-548, Asn-588, Asn-608, Asn-620, Asn-642, Asn-656, and Asn-754. A compositionally biased stretch (low complexity) spans Glu-782 to Glu-802. Residues Glu-782–Thr-831 are disordered. Acidic residues predominate over residues Glu-817–Thr-827. The helical transmembrane segment at Thr-831–Val-851 threads the bilayer. The PGF sorting signal motif lies at Pro-832 to Phe-834.

Belongs to the halobacterial S-layer protein family. Glycosylated. In terms of processing, cleaved by the archaeosortase ArtA at the C-terminus, with removal of a short hydrophobic segment. Post-translationally, lipidation.

The protein localises to the secreted. The protein resides in the cell wall. Its subcellular location is the S-layer. It is found in the cell membrane. Functionally, S-layer protein. The S-layer is a paracrystalline mono-layered assembly of proteins which coats the surface of the cell. The chain is Cell surface glycoprotein from Haloferax gibbonsii.